We begin with the raw amino-acid sequence, 350 residues long: Protein pelota homolog (350 aa).

It belongs to the eukaryotic release factor 1 family. Pelota subfamily. As to quaternary structure, monomer. It depends on a divalent metal cation as a cofactor.

The protein localises to the cytoplasm. Functionally, may function in recognizing stalled ribosomes, interact with stem-loop structures in stalled mRNA molecules, and effect endonucleolytic cleavage of the mRNA. May play a role in the release non-functional ribosomes and degradation of damaged mRNAs. Has endoribonuclease activity. This chain is Protein pelota homolog, found in Methanosarcina acetivorans (strain ATCC 35395 / DSM 2834 / JCM 12185 / C2A).